The chain runs to 509 residues: Zinc finger protein Aiolos (509 aa).

Residues M1–I85 are disordered. The span at L10–T20 shows a compositional bias: polar residues. Position 20 is a phosphothreonine (T20). A compositionally biased stretch (basic and acidic residues) spans D56–L72. Glycyl lysine isopeptide (Lys-Gly) (interchain with G-Cter in SUMO2) cross-links involve residues K61, K73, and K100. C2H2-type zinc fingers lie at residues M118–H140, F146–H168, and F174–H196. Residues Y202–C224 form a C2H2-type 4; atypical zinc finger. Residue K245 forms a Glycyl lysine isopeptide (Lys-Gly) (interchain with G-Cter in SUMO2) linkage. A Phosphothreonine modification is found at T326. Residues H365–G421 are disordered. S378 is subject to Phosphoserine. The segment covering D385–N398 has biased composition (basic and acidic residues). The C2H2-type 5 zinc finger occupies Y452–H474. The tract at residues Y452 to H504 is mediates homodimerization and heterodimerization. Residues F480–H504 form a C2H2-type 6; atypical zinc finger.

The protein belongs to the Ikaros C2H2-type zinc-finger protein family. In terms of assembly, homodimer. Heterodimer with other IKAROS family members. Interacts with IKZF4 and IKZF5. Interacts with IKZF1. Interacts with HRAS. Interacts with FOXP3; this interaction may be required for silencing target genes and regulating the suppressive activity of FOXP3-positive regulatory T-cells (Treg). Interacts with BCL21L; this interaction blocks the anti-apoptotic role of BCL21L. Associates with histone deacetylase complexes containing HDAC1, MTA2 and SIN3A.

The protein localises to the nucleus. It is found in the cytoplasm. Its function is as follows. Transcription factor that plays an important role in the regulation of lymphocyte differentiation. Plays an essential role in regulation of B-cell differentiation, proliferation and maturation to an effector state. Involved in regulating BCL2 expression and controlling apoptosis in T-cells in an IL2-dependent manner. This Bos taurus (Bovine) protein is Zinc finger protein Aiolos (IKZF3).